Consider the following 163-residue polypeptide: Extracellular giant hemoglobin major globin subunit B2 (163 aa).

The first 16 residues, 1–16, serve as a signal peptide directing secretion; the sequence is MIALFVLMGLMAAASA. In terms of domain architecture, Globin spans 19 to 163; the sequence is CCSSEDRANV…RIANGISAGL (145 aa). A disulfide bridge links C20 with C151. C83 is a hydrogen sulfide binding site. Position 114 (H114) interacts with heme b.

Belongs to the globin family. In terms of assembly, the 400 kDa hemoglobin consists of a spherical 24-mer arranged as a double layer of dome-shaped dodecamers. Each dodecamer is composed of the 3-fold trimer of the tetramer A1-A2-B1-B2 having one intra-tetramer (A1-B2) disulfide bond and one inter-tetramer (B1-B2) disulfide bond per tetramer.

The protein resides in the secreted. Its function is as follows. The extracellular giant hemoglobin is able to bind and transport oxygen and hydrosulfide simultaneously and reversibly at two different sites. This Oligobrachia mashikoi (Beard worm) protein is Extracellular giant hemoglobin major globin subunit B2 (ghbB2).